Here is a 164-residue protein sequence, read N- to C-terminus: Anterior gradient protein 2-B (164 aa).

An N-terminal signal peptide occupies residues 1–20 (MESVLKSLFVLLVATSFTLA). Short sequence motifs (homodimer stabilization; interchain) lie at residues 34–43 (SRGWGDNLEW) and 49–56 (EGLYKAKA).

This sequence belongs to the AGR family. As to quaternary structure, monomer and homodimer.

It is found in the secreted. The protein resides in the endoplasmic reticulum. In Xenopus laevis (African clawed frog), this protein is Anterior gradient protein 2-B (agr2-b).